We begin with the raw amino-acid sequence, 231 residues long: Biosynthetic peptidoglycan transglycosylase (231 aa).

The helical transmembrane segment at 10–30 (LLLLGLIGLFLVWQLWLLGWV) threads the bilayer.

The protein belongs to the glycosyltransferase 51 family.

Its subcellular location is the cell inner membrane. It catalyses the reaction [GlcNAc-(1-&gt;4)-Mur2Ac(oyl-L-Ala-gamma-D-Glu-L-Lys-D-Ala-D-Ala)](n)-di-trans,octa-cis-undecaprenyl diphosphate + beta-D-GlcNAc-(1-&gt;4)-Mur2Ac(oyl-L-Ala-gamma-D-Glu-L-Lys-D-Ala-D-Ala)-di-trans,octa-cis-undecaprenyl diphosphate = [GlcNAc-(1-&gt;4)-Mur2Ac(oyl-L-Ala-gamma-D-Glu-L-Lys-D-Ala-D-Ala)](n+1)-di-trans,octa-cis-undecaprenyl diphosphate + di-trans,octa-cis-undecaprenyl diphosphate + H(+). It functions in the pathway cell wall biogenesis; peptidoglycan biosynthesis. Functionally, peptidoglycan polymerase that catalyzes glycan chain elongation from lipid-linked precursors. This Dechloromonas aromatica (strain RCB) protein is Biosynthetic peptidoglycan transglycosylase.